Reading from the N-terminus, the 448-residue chain is MSTTSAINGNHYEQLHQGRTNMYKSKVNVVLGAQWGDEGKGKVVDMLASEVDIVCRCQGGNNAGHTVVANGTEFDFHLLPSGVVNEKCISVIGNGVVIHLPSLFDEVLKNEAKGLQQLENRLIISDRAHLVFDFHQQVDGMQEAEKGGKSLGTTKKGIGPAYSSKATRNGIRVGELLGDFNLFSEKFKSIVNTHLRLFPSIKVDVDAELARYKDYVDKVRPYVKDTICFLHTALRNGKTILVEGANAAMLDIDFGTYPYVTSSNCSIGGVLTGLGLPPQTIGEVIGVVKAYTTRVGDGPFPTEQLNEIGDLLQTRGFEIGVTTKRKRRCGWLDIPLLKYTSLVNGYTCICLTKLDILDTLPEIKVGVNYKRSNGEKLDHFPGTISELSDIEVEYAVLPGWQTSTEHIRNFKELPENAQNYVRFLESQLSVPVRWVGVGKGRESIINVH.

GTP contacts are provided by residues 36–42 and 64–66; these read GDEGKGK and GHT. Asp-37 acts as the Proton acceptor in catalysis. Residues Asp-37 and Gly-64 each coordinate Mg(2+). IMP contacts are provided by residues 37-40, 62-65, Thr-154, Arg-168, Asn-246, Thr-261, and Arg-325; these read DEGK and NAGH. His-65 serves as the catalytic Proton donor. 321-327 lines the substrate pocket; it reads VTTKRKR. Residues Arg-327, 353–355, and 436–438 each bind GTP; these read KLD and GVG.

This sequence belongs to the adenylosuccinate synthetase family. In terms of assembly, homodimer. Mg(2+) is required as a cofactor.

It localises to the cytoplasm. It carries out the reaction IMP + L-aspartate + GTP = N(6)-(1,2-dicarboxyethyl)-AMP + GDP + phosphate + 2 H(+). The protein operates within purine metabolism; AMP biosynthesis via de novo pathway; AMP from IMP: step 1/2. Its function is as follows. Plays an important role in the de novo pathway and in the salvage pathway of purine nucleotide biosynthesis. Catalyzes the first committed step in the biosynthesis of AMP from IMP. The protein is Adenylosuccinate synthetase of Drosophila mojavensis (Fruit fly).